A 385-amino-acid chain; its full sequence is uncharacterized protein (385 aa).

It belongs to the mimivirus L17x/L18x family.

This is an uncharacterized protein from Acanthamoeba polyphaga mimivirus (APMV).